Reading from the N-terminus, the 640-residue chain is Chaperone protein dnaK2 (640 aa).

T197 carries the phosphothreonine; by autocatalysis modification. The tract at residues 605 to 640 (VYQSAQSSDGTGSSSSGGSGSGGDDEVIDAEFSETK) is disordered. Positions 627–640 (GDDEVIDAEFSETK) are enriched in acidic residues.

This sequence belongs to the heat shock protein 70 family.

Its function is as follows. Acts as a chaperone. The protein is Chaperone protein dnaK2 (dnaK2) of Thermosynechococcus vestitus (strain NIES-2133 / IAM M-273 / BP-1).